Here is a 384-residue protein sequence, read N- to C-terminus: Galactokinase (384 aa).

35–38 serves as a coordination point for substrate; the sequence is EHTD. ATP-binding positions include Ser69 and 125 to 131; that span reads GAGLSSS. The Mg(2+) site is built by Ser131 and Glu163. The active-site Proton acceptor is Asp175. Tyr224 provides a ligand contact to substrate.

The protein belongs to the GHMP kinase family. GalK subfamily.

The protein localises to the cytoplasm. It carries out the reaction alpha-D-galactose + ATP = alpha-D-galactose 1-phosphate + ADP + H(+). It participates in carbohydrate metabolism; galactose metabolism. Catalyzes the transfer of the gamma-phosphate of ATP to D-galactose to form alpha-D-galactose-1-phosphate (Gal-1-P). This Aliivibrio fischeri (strain MJ11) (Vibrio fischeri) protein is Galactokinase.